We begin with the raw amino-acid sequence, 246 residues long: NAD-dependent protein deacylase (246 aa).

The 246-residue stretch at 1–246 (MDLSQARAAL…RGLELLLEDD (246 aa)) folds into the Deacetylase sirtuin-type domain. 21 to 41 (GAGISAESGIPTFRDAQTGHW) is a binding site for NAD(+). Substrate-binding residues include Tyr-66 and Arg-69. 101 to 104 (QNVD) serves as a coordination point for NAD(+). The active-site Proton acceptor is His-123. Residues 191–193 (GTS), 217–219 (NPE), and Ala-235 contribute to the NAD(+) site.

This sequence belongs to the sirtuin family. Class III subfamily.

The protein resides in the cytoplasm. It catalyses the reaction N(6)-acetyl-L-lysyl-[protein] + NAD(+) + H2O = 2''-O-acetyl-ADP-D-ribose + nicotinamide + L-lysyl-[protein]. The enzyme catalyses N(6)-succinyl-L-lysyl-[protein] + NAD(+) + H2O = 2''-O-succinyl-ADP-D-ribose + nicotinamide + L-lysyl-[protein]. NAD-dependent lysine deacetylase and desuccinylase that specifically removes acetyl and succinyl groups on target proteins. Modulates the activities of several proteins which are inactive in their acylated form. The polypeptide is NAD-dependent protein deacylase (Deinococcus radiodurans (strain ATCC 13939 / DSM 20539 / JCM 16871 / CCUG 27074 / LMG 4051 / NBRC 15346 / NCIMB 9279 / VKM B-1422 / R1)).